The sequence spans 468 residues: Protein wingless (468 aa).

The signal sequence occupies residues 1–17 (MDISYIFVICLMALCSG). Residues 83-106 (VKGANLAISECQHQFRNRRWNCST) are binds porcupine. A disulfide bond links Cys-93 and Cys-104. 2 N-linked (GlcNAc...) asparagine glycosylation sites follow: Asn-103 and Asn-108. Intrachain disulfides connect Cys-146–Cys-154, Cys-156–Cys-185, Cys-233–Cys-247, and Cys-235–Cys-242. Ser-239 carries the O-palmitoleoyl serine; by PORCN lipid modification. A disordered region spans residues 333-362 (ISKIHHPNMPSPNSLPQAGQRGGRNGRRQG). 6 cysteine pairs are disulfide-bonded: Cys-397–Cys-428, Cys-413–Cys-423, Cys-427–Cys-467, Cys-443–Cys-458, Cys-445–Cys-455, and Cys-450–Cys-451. N-linked (GlcNAc...) asparagine glycosylation occurs at Asn-414.

Belongs to the Wnt family. Monomer; folds by intramolecular disulfide bonds. Interacts with porcupine (por). Interacts with wls; in the Golgi. Interacts with en. Interacts with the proteoglycan Cow (heparan sulfate-bound form); this stabilizes wg and promotes its extracellular distribution. Interacts with peg; the interaction facilitates short-range diffusion of wg. Post-translationally, palmitoleoylated by porcupine. The lipid group functions as a sorting signal, targeting the ligand to polarized vesicles that transport wg to unique sites at the cell surface. Depalmitoleoylated by notum, leading to inhibit Wnt signaling pathway. Major form is glycosylated at 2 sites, glycosylation is stimulated by porcupine at the ER. Segmented expression in embryos. In embryonic tracheal cells, expression is in stripes flanking the tracheal placode.

The protein localises to the secreted. Its subcellular location is the synapse. It is found in the membrane. The protein resides in the extracellular space. It localises to the extracellular matrix. Functionally, binds as a ligand to a family of frizzled seven-transmembrane receptors and acts through a cascade of genes on the nucleus. Segment polarity protein. May be a growth factor. Acts on neighboring cells to regulate at least one gene, the homeobox segmentation gene engrailed. Wg signal represses arm phosphorylation. Wg signaling operates by inactivating the sgg repression of engrailed autoactivation. Wg and Wnt2 have a role in the developing trachea and together are responsible for all dorsal trunk formation. Wg also acts in the developing epidermis. Acts as a morphogen, and diffuses long distances despite its lipidation. Lipophorin is required for diffusion, probably by acting as vehicle for its movement, explaining how it can spread over long distances despite its lipidation. In non-neuronal cells, wls directs wg secretion via clathrin-mediated endocytosis and the retromer complex (a conserved protein complex consisting of Vps26 and Vps35) to sustain a wls traffic loop encompassing the Golgi, the cell surface, an endocytic compartment and a retrograde route leading back to the Golgi. In neuronal cells (the larval motorneuron NMJ), wg signal moves across the synapse through the release of wls-containing exosome-like vesicles. The protein is Protein wingless (wg) of Drosophila melanogaster (Fruit fly).